A 1150-amino-acid polypeptide reads, in one-letter code: ATP-dependent helicase/deoxyribonuclease subunit B (1150 aa).

Residue 8–15 (GRAGSGKS) participates in ATP binding. Positions 786, 1106, 1109, and 1115 each coordinate [4Fe-4S] cluster.

Belongs to the helicase family. AddB/RexB type 1 subfamily. As to quaternary structure, heterodimer of AddA and AddB. The cofactor is Mg(2+). [4Fe-4S] cluster serves as cofactor.

In terms of biological role, the heterodimer acts as both an ATP-dependent DNA helicase and an ATP-dependent, dual-direction single-stranded exonuclease. Recognizes the chi site generating a DNA molecule suitable for the initiation of homologous recombination. The AddB subunit has 5' -&gt; 3' nuclease activity but not helicase activity. In Clostridium botulinum (strain Langeland / NCTC 10281 / Type F), this protein is ATP-dependent helicase/deoxyribonuclease subunit B.